Here is a 764-residue protein sequence, read N- to C-terminus: 5-methyltetrahydropteroyltriglutamate--homocysteine methyltransferase (764 aa).

5-methyltetrahydropteroyltri-L-glutamate-binding positions include 16–19 (RELK) and lysine 117. Residues 442-444 (IGS) and glutamate 495 contribute to the L-homocysteine site. L-methionine is bound by residues 442–444 (IGS) and glutamate 495. Residues 526–527 (RC) and tryptophan 572 contribute to the 5-methyltetrahydropteroyltri-L-glutamate site. Residue aspartate 610 coordinates L-homocysteine. Position 610 (aspartate 610) interacts with L-methionine. 5-methyltetrahydropteroyltri-L-glutamate is bound at residue glutamate 616. Zn(2+)-binding residues include histidine 652, cysteine 654, and glutamate 676. Histidine 705 acts as the Proton donor in catalysis. A Zn(2+)-binding site is contributed by cysteine 737.

Belongs to the vitamin-B12 independent methionine synthase family. It depends on Zn(2+) as a cofactor.

The enzyme catalyses 5-methyltetrahydropteroyltri-L-glutamate + L-homocysteine = tetrahydropteroyltri-L-glutamate + L-methionine. Its pathway is amino-acid biosynthesis; L-methionine biosynthesis via de novo pathway; L-methionine from L-homocysteine (MetE route): step 1/1. In terms of biological role, catalyzes the transfer of a methyl group from 5-methyltetrahydrofolate to homocysteine resulting in methionine formation. The chain is 5-methyltetrahydropteroyltriglutamate--homocysteine methyltransferase from Bordetella pertussis (strain Tohama I / ATCC BAA-589 / NCTC 13251).